Reading from the N-terminus, the 66-residue chain is Putative alpha-neurotoxin RjAa13 (66 aa).

In terms of domain architecture, LCN-type CS-alpha/beta spans 1-60 (KEGYPVDWGNCKYECMSDAYCKDLCVDRKAKSGYCYKLNWSCYCEGLPDDSPIKTNGHCR). 4 disulfide bridges follow: Cys11–Cys59, Cys15–Cys35, Cys21–Cys42, and Cys25–Cys44.

The protein belongs to the long (4 C-C) scorpion toxin superfamily. Sodium channel inhibitor family. Alpha subfamily. In terms of tissue distribution, expressed by the venom gland.

It localises to the secreted. In terms of biological role, alpha toxins bind voltage-independently at site-3 of sodium channels (Nav) and inhibits the inactivation of the activated channels, thereby blocking neuronal transmission. The polypeptide is Putative alpha-neurotoxin RjAa13 (Rhopalurus junceus (Caribbean blue scorpion)).